Reading from the N-terminus, the 65-residue chain is UPF0434 protein CC_0108 (65 aa).

It belongs to the UPF0434 family.

The sequence is that of UPF0434 protein CC_0108 from Caulobacter vibrioides (strain ATCC 19089 / CIP 103742 / CB 15) (Caulobacter crescentus).